We begin with the raw amino-acid sequence, 231 residues long: MAETLAHRFTEFLLESNALKFGDFTLKSGRKSPYFINAGAFDDGKKIAALGAFYAEKISQAIVHNTIPRNIDTVFGPAYKGIPLAVSTAIALTAGHNMTVGYTFDRKEKKDHGDGGWMVGTPLTDGMKVLLVDDVMTAGTAVREVIPKLKAEANVEVVGLVLSVDRMEKTKDSDMSAVKAVEAEFGFPVLSIANVREIFDAAAKMKNPDGTPLLSHDIQQRAAAYLEEYGA.

5-phospho-alpha-D-ribose 1-diphosphate is bound by residues Lys-27, 79–80, Arg-106, Lys-107, Lys-110, His-112, and 133–141; these read YK and DDVMTAGTA. Orotate is bound by residues Thr-137 and Arg-166.

This sequence belongs to the purine/pyrimidine phosphoribosyltransferase family. PyrE subfamily. In terms of assembly, homodimer. Mg(2+) is required as a cofactor.

It catalyses the reaction orotidine 5'-phosphate + diphosphate = orotate + 5-phospho-alpha-D-ribose 1-diphosphate. It participates in pyrimidine metabolism; UMP biosynthesis via de novo pathway; UMP from orotate: step 1/2. Catalyzes the transfer of a ribosyl phosphate group from 5-phosphoribose 1-diphosphate to orotate, leading to the formation of orotidine monophosphate (OMP). The protein is Orotate phosphoribosyltransferase of Bifidobacterium longum (strain NCC 2705).